The chain runs to 2729 residues: 3-methylorcinaldehyde synthase (2729 aa).

The N-terminal acylcarrier protein transacylase domain (SAT) stretch occupies residues 99 to 238 (LPAALLIPLA…GTISNLTRQL (140 aa)). Polar residues predominate over residues 361-373 (SLASTVDINSGNG). The interval 361–391 (SLASTVDINSGNGKTRRVKPADAQSSANSTH) is disordered. Residues 397–828 (DTDIAIVGMS…GSNASAVLVQ (432 aa)) enclose the Ketosynthase family 3 (KS3) domain. Active-site for beta-ketoacyl synthase activity residues include C571, H706, and H748. The segment at 942–1230 (FGGQVSCFVG…FLEAGTNSSV (289 aa)) is malonyl-CoA:ACP transacylase (MAT) domain. Residue S1029 is the For acyl/malonyl transferase activity of the active site. An N-terminal hotdog fold region spans residues 1345 to 1479 (ETILTFHSSD…GTVAFKNPGD (135 aa)). Residues 1345–1669 (ETILTFHSSD…YVKIARPSME (325 aa)) enclose the PKS/mFAS DH domain. The interval 1374 to 1665 (KQLLRGHMTL…LGIAYVKIAR (292 aa)) is product template (PT) domain. H1380 serves as the catalytic Proton acceptor; for dehydratase activity. A C-terminal hotdog fold region spans residues 1513–1669 (DEMLGNQSIY…YVKIARPSME (157 aa)). D1575 functions as the Proton donor; for dehydratase activity in the catalytic mechanism. Over residues 1682-1701 (AGGKTTPQTATKPAAAPVVA) the composition is skewed to low complexity. The disordered stretch occupies residues 1682–1726 (AGGKTTPQTATKPAAAPVVADHTPRTTESASTVNGVNLDDRKPEG). Over residues 1707 to 1716 (TTESASTVNG) the composition is skewed to polar residues. The region spanning 1750 to 1824 (QDMIARVKAV…GLLQCVAGAL (75 aa)) is the Carrier domain. An O-(pantetheine 4'-phosphoryl)serine modification is found at S1784. Positions 1835–1868 (TLTASSDSGINSAKSSILSGTSTSTSTGTTDTGS) are enriched in low complexity. Positions 1835-1874 (TLTASSDSGINSAKSSILSGTSTSTSTGTTDTGSDVGQSM) are disordered. A methyltransferase (C-MeT) domain region spans residues 2086-2254 (EINPLRIMET…GYVDWTEGMT (169 aa)). A reductase (R) domain region spans residues 2344 to 2599 (ITGGTGGLGA…GWTPADYVAR (256 aa)).

It functions in the pathway secondary metabolite biosynthesis; terpenoid biosynthesis. Its function is as follows. Non-reducing polyketide synthase; part of the gene cluster that mediates the biosynthesis of xenovulene A, an unusual meroterpenoid that has potent inhibitory effects on the human gamma-aminobutyrate A (GABAA) benzodiazepine receptor. The first step of xenovulene A biosynthesis is the biosynthesis of 3-methylorcinaldehyde performed by the non-reducing polyketide synthase aspks1. The salicylate hydroxylase asL1 then catalyzes the oxidative dearomatization of 3-methylorcinaldehyde to yield a dearomatized hydroxycyclohexadione. The 2-oxoglutarate-dependent dioxygenase asL3 further catalyzes the oxidative ring expansion to provide the first tropolone metabolite. The cytochrome P450 monooxygenase asR2 allows the synthesis of tropolone hemiacetal. In parallel, a previously unrecognised class of terpene cyclase, asR6, produces alpha-humulene from farnesylpyrophosphate (FPP). The putative Diels-Alderase asR5 probably catalyzes the formation of the tropolone-humulene skeleton by linking humulene and the polyketide moiety. Oxidative-ring contractions catalyzed by asL4 and asL6 then processively remove carbon atoms from the polyketide to yield xenovulene A. In Sarocladium schorii (Acremonium strictum (strain IMI 501407)), this protein is 3-methylorcinaldehyde synthase.